The primary structure comprises 363 residues: Circumsporozoite protein (363 aa).

Residues 1–22 form the signal peptide; the sequence is MKNFILLAVSSILLVDLLPTHF. The span at 48-57 shows a compositional bias: polar residues; sequence GAQQVRQSAS. Residues 48–278 are disordered; it reads GAQQVRQSAS…GQNNQGANAP (231 aa). The segment covering 61 to 96 has biased composition (basic and acidic residues); sequence GLGEKPKEGADKEKKKEKGKEKEEEPKKPNENKLKQ. The segment at 80 to 88 is required for the binding to heparan sulfate proteoglycans (HSPGs) on the surface of host hepatocytes; sequence KEKEEEPKK. Positions 93 to 97 are region I; contains the proteolytic cleavage site; it reads KLKQP. Residues 98 to 109 form a 1; approximate repeat; sequence NEGQPQAQGDGA. A 12 X 12 AA approximate tandem repeats of N-A-G-Q-P-Q-A-Q-G-D-G-A region spans residues 98-241; the sequence is NEGQPQAQGD…GQPQAQGDGA (144 aa). A run of 11 repeats spans residues 110–121, 122–133, 134–145, 146–157, 158–169, 170–181, 182–193, 194–205, 206–217, 218–229, and 230–241. The span at 248–259 shows a compositional bias: gly residues; the sequence is RNGGGAPAGGNE. The segment covering 260–277 has biased composition (low complexity); the sequence is GNKQAGKGQGQNNQGANA. The TSP type-1 domain occupies 289–341; the sequence is KIRSSVTTEWTPCSVTCGNGVRIRRKAHAGNKKAEDLTMDDLEVEACVMDKCA. Intrachain disulfides connect Cys301–Cys335 and Cys305–Cys340. An O-linked (Fuc) threonine glycan is attached at Thr304. Residue Cys340 is the site of GPI-anchor amidated cysteine attachment. Positions 341–363 are cleaved as a propeptide — removed in mature form; sequence AGIFNVVSNSLGLVILLVLALFN.

This sequence belongs to the plasmodium circumsporozoite protein family. Post-translationally, during host cell invasion, proteolytically cleaved at the cell membrane in the region I by a papain-like cysteine protease of parasite origin. Cleavage is triggered by the sporozoite contact with highly sulfated heparan sulfate proteoglycans (HSPGs) present on the host hepatocyte cell surface. Cleavage exposes the TSP type-1 (TSR) domain and is required for productive invasion of host hepatocytes but not for adhesion to the host cell membrane. Cleavage is dispensable for sporozoite development in the oocyst, motility and for traversal of host and vector cells. O-glycosylated; maybe by POFUT2.

It localises to the cell membrane. The protein resides in the cytoplasm. Essential sporozoite protein. In the mosquito vector, required for sporozoite development in the oocyst, migration through the vector hemolymph and entry into the vector salivary glands. In the vertebrate host, required for sporozoite migration through the host dermis and infection of host hepatocytes. Binds to highly sulfated heparan sulfate proteoglycans (HSPGs) on the surface of host hepatocytes. Functionally, in the vertebrate host, binds to highly sulfated heparan sulfate proteoglycans (HSPGs) on the surface of host hepatocytes and is required for sporozoite invasion of the host hepatocytes. This Plasmodium knowlesi (strain H) protein is Circumsporozoite protein.